The following is a 257-amino-acid chain: Ditrans,polycis-undecaprenyl-diphosphate synthase ((2E,6E)-farnesyl-diphosphate specific) (257 aa).

The active site involves aspartate 23. Residue aspartate 23 participates in Mg(2+) binding. Residues 24–27 (GNGR), tryptophan 28, arginine 36, histidine 40, and 68–70 (SSE) each bind substrate. The Proton acceptor role is filled by asparagine 71. Substrate-binding positions include tryptophan 72, arginine 74, arginine 191, and 197–199 (RIS). A Mg(2+)-binding site is contributed by glutamate 210.

It belongs to the UPP synthase family. In terms of assembly, homodimer. The cofactor is Mg(2+).

The catalysed reaction is 8 isopentenyl diphosphate + (2E,6E)-farnesyl diphosphate = di-trans,octa-cis-undecaprenyl diphosphate + 8 diphosphate. In terms of biological role, catalyzes the sequential condensation of isopentenyl diphosphate (IPP) with (2E,6E)-farnesyl diphosphate (E,E-FPP) to yield (2Z,6Z,10Z,14Z,18Z,22Z,26Z,30Z,34E,38E)-undecaprenyl diphosphate (di-trans,octa-cis-UPP). UPP is the precursor of glycosyl carrier lipid in the biosynthesis of bacterial cell wall polysaccharide components such as peptidoglycan and lipopolysaccharide. The chain is Ditrans,polycis-undecaprenyl-diphosphate synthase ((2E,6E)-farnesyl-diphosphate specific) from Xanthomonas axonopodis pv. citri (strain 306).